The chain runs to 351 residues: Photosystem II D2 protein (351 aa).

Residues 39–59 traverse the membrane as a helical segment; sequence TAYLAAGGWFTGTTFVTSWYT. Residue His116 participates in chlorophyll a binding. The helical transmembrane segment at 123–139 threads the bilayer; the sequence is GFCLRQFEIARLVGIRP. Residues Gln128 and Asn141 each contribute to the pheophytin a site. The helical transmembrane segment at 151-164 threads the bilayer; it reads VFVSVFLLYPLGQA. His196 contributes to the chlorophyll a binding site. Residues 206-226 form a helical membrane-spanning segment; sequence GALLCAIHGATVENTLFEDGD. The a plastoquinone site is built by His213 and Phe260. Residue His213 coordinates Fe cation. Fe cation is bound at residue His267. A helical membrane pass occupies residues 277-293; that stretch reads GLWTSSIGIVGLALNLR.

It belongs to the reaction center PufL/M/PsbA/D family. PSII is composed of 1 copy each of membrane proteins PsbA, PsbB, PsbC, PsbD, PsbE, PsbF, PsbH, PsbI, PsbJ, PsbK, PsbL, PsbM, PsbT, PsbX, PsbY, PsbZ, Psb30/Ycf12, at least 3 peripheral proteins of the oxygen-evolving complex and a large number of cofactors. It forms dimeric complexes. It depends on The D1/D2 heterodimer binds P680, chlorophylls that are the primary electron donor of PSII, and subsequent electron acceptors. It shares a non-heme iron and each subunit binds pheophytin, quinone, additional chlorophylls, carotenoids and lipids. There is also a Cl(-1) ion associated with D1 and D2, which is required for oxygen evolution. The PSII complex binds additional chlorophylls, carotenoids and specific lipids. as a cofactor.

The protein resides in the plastid. It is found in the chloroplast thylakoid membrane. The enzyme catalyses 2 a plastoquinone + 4 hnu + 2 H2O = 2 a plastoquinol + O2. Photosystem II (PSII) is a light-driven water:plastoquinone oxidoreductase that uses light energy to abstract electrons from H(2)O, generating O(2) and a proton gradient subsequently used for ATP formation. It consists of a core antenna complex that captures photons, and an electron transfer chain that converts photonic excitation into a charge separation. The D1/D2 (PsbA/PsbD) reaction center heterodimer binds P680, the primary electron donor of PSII as well as several subsequent electron acceptors. D2 is needed for assembly of a stable PSII complex. This Thalassiosira pseudonana (Marine diatom) protein is Photosystem II D2 protein.